A 138-amino-acid chain; its full sequence is Glutathione S-transferase Mu 5 (138 aa).

At Ser1 the chain carries Phosphoserine. In terms of domain architecture, GST N-terminal spans 1–71; the sequence is SMVLGYWDIR…KITQSNAILR (71 aa). Residues 6–7, 39–43, 52–53, and 65–66 contribute to the glutathione site; these read YW, WLDVK, NL, and QS. In terms of domain architecture, GST C-terminal spans 72–135; sequence IRVDIMENQI…FMCRCFKMPI (64 aa).

It belongs to the GST superfamily. Mu family. As to quaternary structure, homodimer.

It localises to the cytoplasm. The catalysed reaction is RX + glutathione = an S-substituted glutathione + a halide anion + H(+). Conjugation of reduced glutathione to a wide number of exogenous and endogenous hydrophobic electrophiles. The polypeptide is Glutathione S-transferase Mu 5 (Mesocricetus auratus (Golden hamster)).